The following is a 197-amino-acid chain: Elongation factor Ts (197 aa).

Positions 81-84 are involved in Mg(2+) ion dislocation from EF-Tu; that stretch reads TDFV.

Belongs to the EF-Ts family.

Its subcellular location is the cytoplasm. Its function is as follows. Associates with the EF-Tu.GDP complex and induces the exchange of GDP to GTP. It remains bound to the aminoacyl-tRNA.EF-Tu.GTP complex up to the GTP hydrolysis stage on the ribosome. This Petrotoga mobilis (strain DSM 10674 / SJ95) protein is Elongation factor Ts.